Reading from the N-terminus, the 392-residue chain is Rhizopuspepsin-5 (392 aa).

An N-terminal signal peptide occupies residues 1–21 (MKFSLISSCVALAVLVLSTEA). Positions 22–69 (APNGKKVNIPLTKNKDYKPNAKNAIQKVLAKYHRHRSTSSSSNSTSTD) are cleaved as a propeptide — activation peptide. Residues 85 to 389 (YFGQVKVGTP…NPTVPQVQIA (305 aa)) form the Peptidase A1 domain. D103 is an active-site residue. A disulfide bridge connects residues C116 and C119. D286 is a catalytic residue. A disulfide bond links C320 and C353.

It belongs to the peptidase A1 family.

The enzyme catalyses Hydrolysis of proteins with broad specificity similar to that of pepsin A, preferring hydrophobic residues at P1 and P1'. Clots milk and activates trypsinogen. Does not cleave 4-Gln-|-His-5, but does cleave 10-His-|-Leu-11 and 12-Val-|-Glu-13 in B chain of insulin.. The sequence is that of Rhizopuspepsin-5 from Rhizopus niveus.